We begin with the raw amino-acid sequence, 189 residues long: ATP-dependent protease subunit HslV (189 aa).

Threonine 12 is a catalytic residue. Na(+) is bound by residues alanine 172, cysteine 175, and threonine 178.

It belongs to the peptidase T1B family. HslV subfamily. A double ring-shaped homohexamer of HslV is capped on each side by a ring-shaped HslU homohexamer. The assembly of the HslU/HslV complex is dependent on binding of ATP.

It localises to the cytoplasm. It catalyses the reaction ATP-dependent cleavage of peptide bonds with broad specificity.. Its activity is regulated as follows. Allosterically activated by HslU binding. Functionally, protease subunit of a proteasome-like degradation complex believed to be a general protein degrading machinery. The protein is ATP-dependent protease subunit HslV of Anaplasma phagocytophilum (strain HZ).